Reading from the N-terminus, the 174-residue chain is Probable adenylyl-sulfate kinase (174 aa).

10–17 contacts ATP; sequence GPSGAGKT. The active-site Phosphoserine intermediate is the Ser84.

Belongs to the APS kinase family.

It catalyses the reaction adenosine 5'-phosphosulfate + ATP = 3'-phosphoadenylyl sulfate + ADP + H(+). It participates in sulfur metabolism; hydrogen sulfide biosynthesis; sulfite from sulfate: step 2/3. Catalyzes the synthesis of activated sulfate. The protein is Probable adenylyl-sulfate kinase (cysC) of Pyrococcus abyssi (strain GE5 / Orsay).